The sequence spans 506 residues: Tyrosine-protein kinase FRK (506 aa).

The SH3 domain occupies 43–111; the sequence is SQGQYFVALF…PSNYVAEDRS (69 aa). The SH2 domain occupies 117 to 209; the sequence is WFFGAIKRAD…GLCVKLEKPC (93 aa). T179 bears the Phosphothreonine mark. A Protein kinase domain is found at 235–492; the sequence is IQLLKRLGSG…TLHWKLEDYF (258 aa). ATP contacts are provided by residues 241 to 249 and K263; that span reads LGSGQFGEV. D355 serves as the catalytic Proton acceptor. Phosphotyrosine; by autocatalysis is present on Y388.

It belongs to the protein kinase superfamily. Tyr protein kinase family. SRC subfamily. Interacts (via the SH3-domain) with PTEN. Interacts with RB1. As to expression, highly expressed in stomach, small intestine and colon. Concentrated in the brush border membranes of epithelial cells, throughout the maturation axis of the adult small intestine.

It is found in the cytoplasm. It localises to the nucleus. It carries out the reaction L-tyrosyl-[protein] + ATP = O-phospho-L-tyrosyl-[protein] + ADP + H(+). Its function is as follows. Non-receptor tyrosine-protein kinase that negatively regulates cell proliferation. Positively regulates PTEN protein stability through phosphorylation of PTEN on 'Tyr-336', which in turn prevents its ubiquitination and degradation, possibly by reducing its binding to NEDD4. May function as a tumor suppressor. The chain is Tyrosine-protein kinase FRK (Frk) from Rattus norvegicus (Rat).